Reading from the N-terminus, the 188-residue chain is Ribosomal RNA small subunit methyltransferase G (188 aa).

S-adenosyl-L-methionine is bound by residues glycine 69, phenylalanine 74, 119–120 (VQ), and arginine 134.

The protein belongs to the methyltransferase superfamily. RNA methyltransferase RsmG family.

The protein resides in the cytoplasm. The catalysed reaction is guanosine(527) in 16S rRNA + S-adenosyl-L-methionine = N(7)-methylguanosine(527) in 16S rRNA + S-adenosyl-L-homocysteine. Its function is as follows. Specifically methylates the N7 position of guanine in position 527 of 16S rRNA. This is Ribosomal RNA small subunit methyltransferase G from Campylobacter jejuni subsp. jejuni serotype O:2 (strain ATCC 700819 / NCTC 11168).